Consider the following 156-residue polypeptide: MGRSISVSFGLLVVFLSLSGTGADQDCLPGWSSHEGHCYKVFNLDKTWEDAEKFCTEQANSGHLVSIDSKKEANFVAELVSQNIKETRRTDFVWIGLRAEDKRQHCSSEWSDGSSINYQNWIEAESKKCLGLEKQTRYRKWVNLNCGQPYRFTCEI.

Positions 1 to 23 (MGRSISVSFGLLVVFLSLSGTGA) are cleaved as a signal peptide. 3 disulfides stabilise this stretch: C27–C38, C55–C154, and C129–C146. One can recognise a C-type lectin domain in the interval 34 to 155 (HEGHCYKVFN…CGQPYRFTCE (122 aa)).

Belongs to the snaclec family. In terms of assembly, heterodimer; disulfide-linked. In terms of tissue distribution, expressed by the venom gland.

It is found in the secreted. In terms of biological role, interferes with one step of hemostasis (modulation of platelet aggregation, or coagulation cascade, for example). In Macrovipera lebetinus (Levantine viper), this protein is Snaclec A1.